We begin with the raw amino-acid sequence, 469 residues long: Fe(3+)-Zn(2+) purple acid phosphatase 12 (469 aa).

The signal sequence occupies residues methionine 1 to glycine 28. N-linked (GlcNAc...) asparagine glycosylation is present at asparagine 114. Aspartate 168 contributes to the Fe cation binding site. Asparagine 176 carries N-linked (GlcNAc...) asparagine glycosylation. Fe cation contacts are provided by aspartate 197 and tyrosine 200. Residue aspartate 197 participates in Zn(2+) binding. Asparagine 234 serves as a coordination point for Zn(2+). Substrate is bound at residue asparagine 234. An N-linked (GlcNAc...) asparagine glycan is attached at asparagine 307. Histidine 319 serves as a coordination point for Zn(2+). Histidine 329 serves as the catalytic Proton donor. Residue histidine 356 coordinates Zn(2+). Histidine 356–histidine 358 is a substrate binding site. Histidine 358 is a Fe cation binding site. Asparagine 429 carries N-linked (GlcNAc...) asparagine glycosylation.

The protein belongs to the metallophosphoesterase superfamily. Purple acid phosphatase family. As to quaternary structure, homodimer; disulfide-linked. It depends on Fe cation as a cofactor. Zn(2+) is required as a cofactor. Expressed in roots, stems, leaves, flowers and siliques.

It localises to the secreted. The enzyme catalyses a phosphate monoester + H2O = an alcohol + phosphate. The sequence is that of Fe(3+)-Zn(2+) purple acid phosphatase 12 (PAP12) from Arabidopsis thaliana (Mouse-ear cress).